A 173-amino-acid polypeptide reads, in one-letter code: NADH-ubiquinone oxidoreductase chain 6 (173 aa).

5 consecutive transmembrane segments (helical) span residues 1-21, 25-45, 53-73, 87-107, and 141-161; these read MTYF…AVAS, PYFA…VLVG, LVLF…SAAL, VLGY…FFWG, and GGML…VLEL.

It belongs to the complex I subunit 6 family.

It localises to the mitochondrion membrane. It catalyses the reaction a ubiquinone + NADH + 5 H(+)(in) = a ubiquinol + NAD(+) + 4 H(+)(out). Functionally, core subunit of the mitochondrial membrane respiratory chain NADH dehydrogenase (Complex I) that is believed to belong to the minimal assembly required for catalysis. Complex I functions in the transfer of electrons from NADH to the respiratory chain. The immediate electron acceptor for the enzyme is believed to be ubiquinone. The polypeptide is NADH-ubiquinone oxidoreductase chain 6 (MT-ND6) (Carassius auratus (Goldfish)).